A 545-amino-acid chain; its full sequence is MIRPLPPELRGLLARGEVLLTVKDAVRELLENALDAGARRVRVELWGGGLKRLVVEDDGEGIPLEDLPLAVEPYATSKLQDLEGIRTLGFRGQALYALRQAARLRIRSRPRGQLGGGLLLAEGERVEVRPVPAPPGTRVEVEGLFLGEGRDPKGEVRGVLELLKRYLLHHPRLALALFAEGEARLLFPGAGLEEAARLAFGRLLAKRLLPLAYGAGGLEVQGLVSRPEVSRTRPDRLFLAVNGRPVAFPEGLLRRVRRAYRELLPEGHYPVGVLNLFLPQEAFRLRLDARKEEVVLSEEAEALVEEALLALFRRENLARALPEPKPLQPLSPPTASGLPRLRFLAQFRESYLLAEAGDTLYVVDQHAAHERILYEDLLKRVAEGPKPLPRPLLVLLAPEEEALLEAGQEALAALFRWEPFGPGRVRLLMAPAFLHPYPLLLPEVFKEALRGEGRSLKALLARLACLPAVKAGHPLGEAQGQALLDALLTCETPWACPHGRPVLLALKEEDLIRRFGRRSGARGGGEARPRPQEESFPEAPLPREP.

A disordered region spans residues 516-545 (GRRSGARGGGEARPRPQEESFPEAPLPREP).

It belongs to the DNA mismatch repair MutL/HexB family.

Its function is as follows. This protein is involved in the repair of mismatches in DNA. It is required for dam-dependent methyl-directed DNA mismatch repair. May act as a 'molecular matchmaker', a protein that promotes the formation of a stable complex between two or more DNA-binding proteins in an ATP-dependent manner without itself being part of a final effector complex. In Thermus thermophilus (strain ATCC BAA-163 / DSM 7039 / HB27), this protein is DNA mismatch repair protein MutL.